The sequence spans 1013 residues: Poly [ADP-ribose] polymerase 1 (1013 aa).

2 PARP-type zinc fingers span residues tyrosine 10–glycine 92 and phenylalanine 113–lysine 203. Zn(2+) contacts are provided by cysteine 22, cysteine 25, histidine 54, cysteine 57, cysteine 125, cysteine 128, histidine 159, and cysteine 162. The tract at residues valine 202 to leucine 228 is disordered. Positions lysine 207–lysine 209 match the Nuclear localization signal motif. Residues lysine 219 to lysine 353 enclose the PADR1 zinc-binding domain. The zinc ribbon stretch occupies residues glycine 284–aspartate 326. Residues cysteine 289, cysteine 292, cysteine 305, and cysteine 315 each coordinate Zn(2+). Residues lysine 353–proline 385 form a disordered region. The segment covering proline 356–serine 378 has biased composition (low complexity). Positions glycine 365–lysine 523 are automodification domain. Residues proline 385 to aspartate 461 form the BRCT domain. Residues glutamate 413, glutamate 435, glutamate 444, glutamate 445, glutamate 464, glutamate 471, glutamate 484, and glutamate 488 each carry the polyADP-ribosyl glutamic acid modification. Low complexity predominate over residues alanine 494–threonine 507. Residues alanine 494–methionine 522 are disordered. Glutamate 512 and glutamate 513 each carry polyADP-ribosyl glutamic acid. In terms of domain architecture, WGR spans cysteine 541–phenylalanine 637. The PARP alpha-helical domain occupies lysine 661–arginine 778. In terms of domain architecture, PARP catalytic spans aspartate 787–tryptophan 1013. Residues histidine 861–serine 863, glycine 870, arginine 877, and serine 903 each bind NAD(+). Glutamate 987 functions as the For poly [ADP-ribose] polymerase activity in the catalytic mechanism.

The protein belongs to the ARTD/PARP family. Homodimer; PARP-type zinc-fingers from separate parp1 molecules form a dimer module that specifically recognizes DNA strand breaks. Poly-ADP-ribosylated on serine, glutamate and aspartate residues by autocatalysis. Auto-ADP-ribosylation on serine takes place following interaction with HPF1. Auto poly-ADP-ribosylation on serine residues promotes its dissociation from chromatin.

The protein resides in the chromosome. It localises to the nucleus. The protein localises to the nucleolus. It is found in the cytoplasm. Its subcellular location is the cytosol. It catalyses the reaction NAD(+) + (ADP-D-ribosyl)n-acceptor = nicotinamide + (ADP-D-ribosyl)n+1-acceptor + H(+).. The catalysed reaction is L-seryl-[protein] + NAD(+) = O-(ADP-D-ribosyl)-L-seryl-[protein] + nicotinamide + H(+). The enzyme catalyses L-aspartyl-[protein] + NAD(+) = 4-O-(ADP-D-ribosyl)-L-aspartyl-[protein] + nicotinamide. It carries out the reaction L-glutamyl-[protein] + NAD(+) = 5-O-(ADP-D-ribosyl)-L-glutamyl-[protein] + nicotinamide. It catalyses the reaction L-tyrosyl-[protein] + NAD(+) = O-(ADP-D-ribosyl)-L-tyrosyl-[protein] + nicotinamide + H(+). The catalysed reaction is L-histidyl-[protein] + NAD(+) = N(tele)-(ADP-D-ribosyl)-L-histidyl-[protein] + nicotinamide + H(+). ADP-ribosyltransferase activity is regulated via an allosteric activation mechanism. In absence of activation signal, parp1 is autoinhibited by the PARP alpha-helical domain (also named HD region), which prevents effective NAD(+)-binding. Activity is highly stimulated by signals, such as DNA strand breaks. Binding to damaged DNA unfolds the PARP alpha-helical domain, relieving autoinhibition. Poly-ADP-ribosyltransferase activity is tightly regulated and parp1 is removed from damaged chromatin following initial poly-ADP-ribosylation of chromatin to avoid prolonged residence (trapping) that has cytotoxic consequences. A number of factors or post-translational modifications (auto-poly-ADP-ribosylation) promote parp1 removal from chromatin. Poly-ADP-ribosyltransferase that mediates poly-ADP-ribosylation of proteins and plays a key role in DNA repair. Mediates glutamate, aspartate, serine, histidine or tyrosine ADP-ribosylation of proteins: the ADP-D-ribosyl group of NAD(+) is transferred to the acceptor carboxyl group of target residues and further ADP-ribosyl groups are transferred to the 2'-position of the terminal adenosine moiety, building up a polymer with an average chain length of 20-30 units. Serine ADP-ribosylation of proteins constitutes the primary form of ADP-ribosylation of proteins in response to DNA damage. Specificity for the different amino acids is conferred by interacting factors, such as hpf1 and nmnat1. Following interaction with hpf1, catalyzes serine ADP-ribosylation of target proteins; hpf1 confers serine specificity by completing the parp1 active site. Also catalyzes tyrosine ADP-ribosylation of target proteins following interaction with hpf1. Following interaction with nmnat1, catalyzes glutamate and aspartate ADP-ribosylation of target proteins; nmnat1 confers glutamate and aspartate specificity. Parp1 initiates the repair of DNA breaks: recognizes and binds DNA breaks within chromatin and recruits hpf1, licensing serine ADP-ribosylation of target proteins, such as histones (H2BS6ADPr and H3S10ADPr), thereby promoting decompaction of chromatin and the recruitment of repair factors leading to the reparation of DNA strand breaks. In addition to base excision repair (BER) pathway, also involved in double-strand breaks (DSBs) repair. Mediates the poly-ADP-ribosylation of a number of proteins. In addition to proteins, also able to ADP-ribosylate DNA: catalyzes ADP-ribosylation of DNA strand break termini containing terminal phosphates and a 2'-OH group in single- and double-stranded DNA, respectively. Parp1-mediated DNA repair in neurons plays a role in sleep: senses DNA damage in neurons and promotes sleep, facilitating efficient DNA repair. In addition to DNA repair, also involved in other processes, such as transcription regulation, programmed cell death, membrane repair, adipogenesis and innate immunity. Acts as a repressor of transcription: binds to nucleosomes and modulates chromatin structure in a manner similar to histone H1, thereby altering RNA polymerase II. Acts both as a positive and negative regulator of transcription elongation, depending on the context. Poly-ADP-ribose chains generated by parp1 also play a role in poly-ADP-ribose-dependent cell death, a process named parthanatos. Also acts as a negative regulator of the cGAS-STING pathway by mediating poly-ADP-ribosylation and inactivation of cgas. Acts as a negative regulator of adipogenesis by catalyzing poly ADP-ribosylation of histone H2B on 'Glu-35' (H2BE35ADPr). This Danio rerio (Zebrafish) protein is Poly [ADP-ribose] polymerase 1.